An 84-amino-acid polypeptide reads, in one-letter code: Small ribosomal subunit protein uS17 (84 aa).

It belongs to the universal ribosomal protein uS17 family. In terms of assembly, part of the 30S ribosomal subunit.

In terms of biological role, one of the primary rRNA binding proteins, it binds specifically to the 5'-end of 16S ribosomal RNA. This chain is Small ribosomal subunit protein uS17, found in Yersinia enterocolitica serotype O:8 / biotype 1B (strain NCTC 13174 / 8081).